The sequence spans 328 residues: Biotin synthase (328 aa).

One can recognise a Radical SAM core domain in the interval 48-275 (NRIQLSKLLN…KSHVRLTAGR (228 aa)). [4Fe-4S] cluster contacts are provided by Cys63, Cys67, and Cys70. [2Fe-2S] cluster is bound by residues Cys107, Cys138, Cys198, and Arg270.

Belongs to the radical SAM superfamily. Biotin synthase family. Homodimer. [4Fe-4S] cluster serves as cofactor. Requires [2Fe-2S] cluster as cofactor.

The enzyme catalyses (4R,5S)-dethiobiotin + (sulfur carrier)-SH + 2 reduced [2Fe-2S]-[ferredoxin] + 2 S-adenosyl-L-methionine = (sulfur carrier)-H + biotin + 2 5'-deoxyadenosine + 2 L-methionine + 2 oxidized [2Fe-2S]-[ferredoxin]. The protein operates within cofactor biosynthesis; biotin biosynthesis; biotin from 7,8-diaminononanoate: step 2/2. Its function is as follows. Catalyzes the conversion of dethiobiotin (DTB) to biotin by the insertion of a sulfur atom into dethiobiotin via a radical-based mechanism. The protein is Biotin synthase of Brucella abortus (strain S19).